The sequence spans 176 residues: Calcium and integrin-binding family member 2 (176 aa).

3 EF-hand domains span residues 55-90 (RENPFKERIVEAFSEDGEGNLTFNDFVDMFSVLCES), 92-127 (PRDLKASYAFKIYDFNTDNFICKEDLQLTLARLTKS), and 133-168 (EVVLVCDKVIEEADLDGDGKLGFADFEDMIAKAPDF). Ca(2+)-binding residues include Asp105, Asn107, Asp109, Asp116, Asp146, Asp148, Asp150, Lys152, and Asp157.

As to quaternary structure, monomer. Homodimer. Interacts with WHRN and MYO7A. Interacts with ITGA2B (via C-terminus cytoplasmic tail region); the interactions are stabilized/increased in a calcium and magnesium-dependent manner. Interacts with ITGA7 (via C-terminus cytoplasmic tail region); the interactions are stabilized/increased in a calcium and magnesium-dependent manner. Interacts with TMC1. Interacts with TMC2. In terms of tissue distribution, expressed in liver, heart, kidney, brain, spleen, stomach, ovary, testis and muscle.

The protein resides in the cytoplasm. It localises to the cell projection. It is found in the stereocilium. Its subcellular location is the photoreceptor inner segment. The protein localises to the cilium. The protein resides in the photoreceptor outer segment. It localises to the cell membrane. It is found in the sarcolemma. Functionally, calcium- and integrin-binding protein that plays a role in intracellular calcium homeostasis. Acts as an auxiliary subunit of the sensory mechanoelectrical transduction (MET) channel in hair cells. Essential for mechanoelectrical transduction (MET) currents in auditory hair cells and thereby required for hearing. Regulates the function of hair cell mechanotransduction by controlling the distribution of transmembrane channel-like proteins TMC1 and TMC2, and by regulating the function of the MET channels in hair cells. Required for the maintenance of auditory hair cell stereocilia bundle morphology and function and for hair-cell survival in the cochlea. Critical for proper photoreceptor cell maintenance and function. Plays a role in intracellular calcium homeostasis by decreasing ATP-induced calcium release. The protein is Calcium and integrin-binding family member 2 (CIB2) of Ovis aries (Sheep).